Here is a 161-residue protein sequence, read N- to C-terminus: MAEQNQRTNTPDNGPEFAIQRLYIKDLSFEAPRSPQVFLEEWQPELNMDLATKVNDLGEDNHEVVLTVTVTVTMKESHIFLAEVQQGGIFTIKNFPKEEMRPMLGSFCPNILYPYAREAITDMVVRGGFPQLYLAPVNFDALFEQHEQSEEGNSGTEDRVH.

Belongs to the SecB family. In terms of assembly, homotetramer, a dimer of dimers. One homotetramer interacts with 1 SecA dimer.

It localises to the cytoplasm. One of the proteins required for the normal export of preproteins out of the cell cytoplasm. It is a molecular chaperone that binds to a subset of precursor proteins, maintaining them in a translocation-competent state. It also specifically binds to its receptor SecA. This is Protein-export protein SecB from Coxiella burnetii (strain Dugway 5J108-111).